The chain runs to 328 residues: Putative lipase LIH1 (328 aa).

The Nucleophile role is filled by Ser181. Residues Asp253 and His315 each act as charge relay system in the active site.

The protein belongs to the AB hydrolase superfamily. Lipase family.

It catalyses the reaction a triacylglycerol + H2O = a diacylglycerol + a fatty acid + H(+). In terms of biological role, lipases catalyze the hydrolysis of the ester bond of tri-, di- and monoglycerides of long-chain fatty acids into fatty acids and glycerol. The sequence is that of Putative lipase LIH1 from Saccharomyces cerevisiae (strain ATCC 204508 / S288c) (Baker's yeast).